Consider the following 161-residue polypeptide: Nucleotide-binding protein XOO0647 (161 aa).

This sequence belongs to the YajQ family.

Its function is as follows. Nucleotide-binding protein. This is Nucleotide-binding protein XOO0647 from Xanthomonas oryzae pv. oryzae (strain MAFF 311018).